Reading from the N-terminus, the 427-residue chain is Glutamate-1-semialdehyde 2,1-aminomutase (427 aa).

Lysine 265 bears the N6-(pyridoxal phosphate)lysine mark.

It belongs to the class-III pyridoxal-phosphate-dependent aminotransferase family. HemL subfamily. As to quaternary structure, homodimer. Pyridoxal 5'-phosphate serves as cofactor.

It localises to the cytoplasm. The catalysed reaction is (S)-4-amino-5-oxopentanoate = 5-aminolevulinate. Its pathway is porphyrin-containing compound metabolism; protoporphyrin-IX biosynthesis; 5-aminolevulinate from L-glutamyl-tRNA(Glu): step 2/2. The sequence is that of Glutamate-1-semialdehyde 2,1-aminomutase from Burkholderia pseudomallei (strain 1710b).